The sequence spans 98 residues: Putative zinc finger protein ORF98b (98 aa).

The C2H2-type zinc finger occupies 54–77 (GFCPYCHNHYRTFGILANHIMRSH).

The polypeptide is Putative zinc finger protein ORF98b (Acidianus convivator (ATV)).